Consider the following 444-residue polypeptide: F-box protein At1g53790 (444 aa).

Residues 76-125 (VSCFRYIPIDLLMDIFSRVPAKSIARFRCVSKLWESILCRPDFKELFMTM) form the F-box domain.

The protein is F-box protein At1g53790 of Arabidopsis thaliana (Mouse-ear cress).